Consider the following 185-residue polypeptide: MTKEIKADAKTRMDKAIDVLSRELAKLRAGRANPALLDRVTVEYYGAQTPLNQLASVTVPEARLLLITPYDKTAVASIEKAILKSDLGLTPSNDGQVIRIAIPPLTEERRKDLVRLVSKTAEESKVAVRNIRRDANDELKKLQKDGEMTEDELRSATDDIQKLTDTYVAKIDEKAKQKEQEIIEV.

It belongs to the RRF family.

It is found in the cytoplasm. Its function is as follows. Responsible for the release of ribosomes from messenger RNA at the termination of protein biosynthesis. May increase the efficiency of translation by recycling ribosomes from one round of translation to another. This chain is Ribosome-recycling factor, found in Shouchella clausii (strain KSM-K16) (Alkalihalobacillus clausii).